Here is a 434-residue protein sequence, read N- to C-terminus: Alpha-enolase (434 aa).

An N-acetylserine modification is found at serine 2. The residue at position 5 (lysine 5) is an N6-acetyllysine. Serine 27 is subject to Phosphoserine. Position 40 (serine 40) interacts with Mg(2+). Position 44 is a phosphotyrosine (tyrosine 44). Position 60 is an N6-acetyllysine; alternate (lysine 60). Position 60 is an N6-succinyllysine; alternate (lysine 60). Lysine 64 and lysine 71 each carry N6-acetyllysine. Lysine 89 carries the N6-acetyllysine; alternate modification. Lysine 89 carries the post-translational modification N6-succinyllysine; alternate. N6-acetyllysine occurs at positions 92 and 126. Positions 158 and 167 each coordinate substrate. Residues lysine 193 and lysine 199 each carry the N6-acetyllysine modification. An N6-acetyllysine; alternate modification is found at lysine 202. Lysine 202 is covalently cross-linked (Glycyl lysine isopeptide (Lys-Gly) (interchain with G-Cter in SUMO2); alternate). The Proton donor role is filled by glutamate 210. Residues lysine 228 and lysine 233 each carry the N6-acetyllysine; alternate modification. Lysine 228 is subject to N6-succinyllysine; alternate. At lysine 228 the chain carries N6-(2-hydroxyisobutyryl)lysine; alternate. Lysine 233 carries the N6-malonyllysine; alternate modification. Aspartate 245 contributes to the Mg(2+) binding site. Serine 254 carries the post-translational modification Phosphoserine. N6-acetyllysine is present on lysine 256. A phosphoserine mark is found at serine 263 and serine 272. The residue at position 281 (lysine 281) is an N6-acetyllysine; alternate. At lysine 281 the chain carries N6-(2-hydroxyisobutyryl)lysine; alternate. Lysine 285 carries the post-translational modification N6-acetyllysine. Tyrosine 287 is subject to Phosphotyrosine. The residue at position 291 (serine 291) is a Phosphoserine. Residues glutamate 293 and aspartate 318 each contribute to the Mg(2+) site. Residues glutamate 293 and aspartate 318 each coordinate substrate. Lysine 335 and lysine 343 each carry N6-acetyllysine. Residue lysine 343 is the Proton acceptor of the active site. Residues 370–373 and lysine 394 each bind substrate; that span reads SHRS. The interval 405 to 434 is required for interaction with PLG; it reads AKYNQLLRIEEELGSKAKFAGRNFRNPLAK. An N6-acetyllysine modification is found at lysine 406. The residue at position 420 (lysine 420) is an N6-acetyllysine; alternate. The residue at position 420 (lysine 420) is an N6-succinyllysine; alternate. Position 420 is an N6-malonyllysine; alternate (lysine 420).

This sequence belongs to the enolase family. Mammalian enolase is composed of 3 isozyme subunits, alpha, beta and gamma, which can form homodimers or heterodimers which are cell-type and development-specific. ENO1 interacts with PLG in the neuronal plasma membrane and promotes its activation. The C-terminal lysine is required for this binding. Interacts with ENO4 and PGAM2. Interacts with CMTM6. The cofactor is Mg(2+). In terms of processing, ISGylated. Lysine 2-hydroxyisobutyrylation (Khib) by p300/EP300 activates the phosphopyruvate hydratase activity.

The protein localises to the cytoplasm. Its subcellular location is the cell membrane. It carries out the reaction (2R)-2-phosphoglycerate = phosphoenolpyruvate + H2O. Its pathway is carbohydrate degradation; glycolysis; pyruvate from D-glyceraldehyde 3-phosphate: step 4/5. Its function is as follows. Glycolytic enzyme the catalyzes the conversion of 2-phosphoglycerate to phosphoenolpyruvate. In addition to glycolysis, involved in various processes such as growth control, hypoxia tolerance and allergic responses. May also function in the intravascular and pericellular fibrinolytic system due to its ability to serve as a receptor and activator of plasminogen on the cell surface of several cell-types such as leukocytes and neurons. Stimulates immunoglobulin production. This chain is Alpha-enolase (ENO1), found in Macaca fascicularis (Crab-eating macaque).